The sequence spans 856 residues: Alginate lyase 7 (856 aa).

PbH1 repeat units follow at residues Asp133 to Glu155, Thr157 to Phe179, Gln180 to Thr202, Ser204 to Arg226, Val234 to Met256, Ser257 to Gly279, Val280 to Val304, and Thr320 to Glu342. Hemolysin-type calcium-binding repeat units lie at residues Gly387 to Leu402, Val404 to Leu421, Glu422 to Phe439, Gly538 to Ala549, Leu554 to Leu563, Gly565 to Leu581, Asn582 to Phe599, Gly715 to Leu731, and Gly733 to Phe749.

This sequence belongs to the D-mannuronate C5-epimerase family. Ca(2+) serves as cofactor.

The protein resides in the secreted. It catalyses the reaction Eliminative cleavage of alginate to give oligosaccharides with 4-deoxy-alpha-L-erythro-hex-4-enuronosyl groups at their non-reducing ends and beta-D-mannuronate at their reducing end.. It carries out the reaction [(1-&gt;4)-beta-D-mannuronosyl](n) = [alginate](n). Its pathway is glycan biosynthesis; alginate biosynthesis. With respect to regulation, inhibited by zinc. Its function is as follows. Converts beta-D-mannuronic acid (M) to alpha-L-guluronic acid (G). Has both epimerase and lyase activities. Contributes to abortive encystment by degrading the coat from inside the cyst. Important for cyst germination. The protein is Alginate lyase 7 of Azotobacter vinelandii.